The following is a 326-amino-acid chain: MPDLHRLALSALQYRPVGAQSGNASSAAASCTGDYMAGDSSLERDCGRLADGCSFPQVRGSATGVSDQSLGGSIHFSNAGRDEYVVELGRLLDLTDGVAQPKKLFDLLSAFAFKFGCKWLAYGPLTSDHKALNRVKCDSEEILNYPDGWRERCLEMGYETIAPVIKESRMGAGPIRWSDMYSDASTTEYERRMFDEAAMFGLRSGITVPLRGPRGSCAIMSFARHCEREFHDRTIAYLQLAATHFHLRVAKIANLNAVQKIPALSLREKECVLWVARGKSSWDIGVIMRISENTVNFHIKNVMRKLGTSSRTVAAIKAISLGIIEL.

Positions alanine 257–glycine 322 constitute an HTH luxR-type domain. The H-T-H motif DNA-binding region spans serine 281 to lysine 300.

The protein belongs to the autoinducer-regulated transcriptional regulatory protein family.

The sequence is that of Putative HTH-type transcriptional regulator y4qH from Sinorhizobium fredii (strain NBRC 101917 / NGR234).